The primary structure comprises 129 residues: Small ribosomal subunit protein uS11 (129 aa).

It belongs to the universal ribosomal protein uS11 family. In terms of assembly, part of the 30S ribosomal subunit. Interacts with proteins S7 and S18. Binds to IF-3.

Located on the platform of the 30S subunit, it bridges several disparate RNA helices of the 16S rRNA. Forms part of the Shine-Dalgarno cleft in the 70S ribosome. This chain is Small ribosomal subunit protein uS11, found in Nitratidesulfovibrio vulgaris (strain ATCC 29579 / DSM 644 / CCUG 34227 / NCIMB 8303 / VKM B-1760 / Hildenborough) (Desulfovibrio vulgaris).